Reading from the N-terminus, the 355-residue chain is Erythronate-4-phosphate dehydrogenase (355 aa).

2 residues coordinate substrate: S45 and T66. D146 lines the NAD(+) pocket. Residue R206 is part of the active site. D229 provides a ligand contact to NAD(+). E234 is an active-site residue. H251 serves as the catalytic Proton donor. NAD(+) is bound at residue G254. Y255 contacts substrate.

This sequence belongs to the D-isomer specific 2-hydroxyacid dehydrogenase family. PdxB subfamily. In terms of assembly, homodimer.

The protein resides in the cytoplasm. The enzyme catalyses 4-phospho-D-erythronate + NAD(+) = (R)-3-hydroxy-2-oxo-4-phosphooxybutanoate + NADH + H(+). Its pathway is cofactor biosynthesis; pyridoxine 5'-phosphate biosynthesis; pyridoxine 5'-phosphate from D-erythrose 4-phosphate: step 2/5. In terms of biological role, catalyzes the oxidation of erythronate-4-phosphate to 3-hydroxy-2-oxo-4-phosphonooxybutanoate. This chain is Erythronate-4-phosphate dehydrogenase, found in Acinetobacter baumannii (strain ATCC 17978 / DSM 105126 / CIP 53.77 / LMG 1025 / NCDC KC755 / 5377).